Here is a 605-residue protein sequence, read N- to C-terminus: Aspartate--tRNA(Asp/Asn) ligase (605 aa).

Glutamate 172 serves as a coordination point for L-aspartate. Positions 196 to 199 (QLFK) are aspartate. Residue arginine 218 participates in L-aspartate binding. ATP is bound by residues 218-220 (RDE) and glutamine 227. Histidine 455 lines the L-aspartate pocket. Position 489 (glutamate 489) interacts with ATP. Arginine 496 serves as a coordination point for L-aspartate. Residue 541 to 544 (GLDR) coordinates ATP.

Belongs to the class-II aminoacyl-tRNA synthetase family. Type 1 subfamily. As to quaternary structure, homodimer.

Its subcellular location is the cytoplasm. It catalyses the reaction tRNA(Asx) + L-aspartate + ATP = L-aspartyl-tRNA(Asx) + AMP + diphosphate. Functionally, aspartyl-tRNA synthetase with relaxed tRNA specificity since it is able to aspartylate not only its cognate tRNA(Asp) but also tRNA(Asn). Reaction proceeds in two steps: L-aspartate is first activated by ATP to form Asp-AMP and then transferred to the acceptor end of tRNA(Asp/Asn). The sequence is that of Aspartate--tRNA(Asp/Asn) ligase from Ralstonia nicotianae (strain ATCC BAA-1114 / GMI1000) (Ralstonia solanacearum).